The sequence spans 101 residues: Small ribosomal subunit protein uS14 (101 aa).

Belongs to the universal ribosomal protein uS14 family. In terms of assembly, part of the 30S ribosomal subunit. Contacts proteins S3 and S10.

Functionally, binds 16S rRNA, required for the assembly of 30S particles and may also be responsible for determining the conformation of the 16S rRNA at the A site. The polypeptide is Small ribosomal subunit protein uS14 (Colwellia psychrerythraea (strain 34H / ATCC BAA-681) (Vibrio psychroerythus)).